The chain runs to 649 residues: Threonine--tRNA ligase (649 aa).

The TGS domain occupies 1 to 66 (MVQITLPDGS…DNDAQLAIVT (66 aa)). Residues 247–538 (DHRKIGRELD…LIENHAGAMP (292 aa)) form a catalytic region. Residues cysteine 338, histidine 389, and histidine 515 each contribute to the Zn(2+) site.

The protein belongs to the class-II aminoacyl-tRNA synthetase family. As to quaternary structure, homodimer. Zn(2+) is required as a cofactor.

It localises to the cytoplasm. The catalysed reaction is tRNA(Thr) + L-threonine + ATP = L-threonyl-tRNA(Thr) + AMP + diphosphate + H(+). Its function is as follows. Catalyzes the attachment of threonine to tRNA(Thr) in a two-step reaction: L-threonine is first activated by ATP to form Thr-AMP and then transferred to the acceptor end of tRNA(Thr). Also edits incorrectly charged L-seryl-tRNA(Thr). In Bordetella bronchiseptica (strain ATCC BAA-588 / NCTC 13252 / RB50) (Alcaligenes bronchisepticus), this protein is Threonine--tRNA ligase.